The following is a 303-amino-acid chain: Acetaldehyde dehydrogenase (303 aa).

Cysteine 131 acts as the Acyl-thioester intermediate in catalysis. Residues 162 to 170 (SVGPGTRAN) and asparagine 273 each bind NAD(+).

Belongs to the acetaldehyde dehydrogenase family.

The enzyme catalyses acetaldehyde + NAD(+) + CoA = acetyl-CoA + NADH + H(+). The sequence is that of Acetaldehyde dehydrogenase from Marinomonas sp. (strain MWYL1).